Consider the following 100-residue polypeptide: Large ribosomal subunit protein uL23 (100 aa).

This sequence belongs to the universal ribosomal protein uL23 family. In terms of assembly, part of the 50S ribosomal subunit. Contacts protein L29, and trigger factor when it is bound to the ribosome.

Functionally, one of the early assembly proteins it binds 23S rRNA. One of the proteins that surrounds the polypeptide exit tunnel on the outside of the ribosome. Forms the main docking site for trigger factor binding to the ribosome. This Edwardsiella ictaluri (strain 93-146) protein is Large ribosomal subunit protein uL23.